Here is a 111-residue protein sequence, read N- to C-terminus: Large ribosomal subunit protein uL22 (111 aa).

The protein belongs to the universal ribosomal protein uL22 family. In terms of assembly, part of the 50S ribosomal subunit.

In terms of biological role, this protein binds specifically to 23S rRNA; its binding is stimulated by other ribosomal proteins, e.g. L4, L17, and L20. It is important during the early stages of 50S assembly. It makes multiple contacts with different domains of the 23S rRNA in the assembled 50S subunit and ribosome. Its function is as follows. The globular domain of the protein is located near the polypeptide exit tunnel on the outside of the subunit, while an extended beta-hairpin is found that lines the wall of the exit tunnel in the center of the 70S ribosome. This chain is Large ribosomal subunit protein uL22, found in Acholeplasma laidlawii (strain PG-8A).